Consider the following 631-residue polypeptide: MSAQKETLGFQTEVKQLLKLMIHSLYSNKEIFLRELISNASDAADKLRFEGLAKPELFENDPELKIRIAFDKDARTITIADNGIGMSRDEVVSHIGTIAKSGTKSFFEQLSGDEKKDAHLIGQFGVGFYSAFIVADKVTLTTRRAGEAEAVRWESHGEGEYTLESVEKAERGTEIVLHLKEGEDELLNDWKLKGIIRKYSDHISIPIEMKKGNSYGENGEVIVSDEMEAVNSASALWTRSKNDISEEQYQEFYKHVAHDFTAPLAWSHARVEGRQEYTELLYIPSRAPFDLYDRERKQGVKLYVRRVFIMEDTEKLMPHYLRFVRGVIDSNDLPLNVSREILQESKDIDAIRAGCVKKVLGLLEDLSANQPEKYAEFWKEFGQVLKEGVGEDFANKERIAKLLRFVSTASEDAEPTVSLADYIGRMKEGQDKIYYITADTLAAAKNSPHLEVFKKKGVEVLLLTDRVDEWVTGSLFEFDGKALQSVAKGALDLGALEDEADKEAQKQVEEASKPVVEKVQKALGDKVKEVRATARLVESPACLVAGEHDMSAHLERMLKAAGQKIEGSKPTLEINPEHVLVKRLAEESDEARAGDLAAVLYDQALLAEGGKLEDPASFVKRINKLMLELSV.

Positions 1-339 (MSAQKETLGF…SNDLPLNVSR (339 aa)) are a; substrate-binding. The segment at 340–556 (EILQESKDID…EHDMSAHLER (217 aa)) is b. The c stretch occupies residues 557 to 631 (MLKAAGQKIE…INKLMLELSV (75 aa)).

The protein belongs to the heat shock protein 90 family. Homodimer.

Its subcellular location is the cytoplasm. Its function is as follows. Molecular chaperone. Has ATPase activity. This Chromobacterium violaceum (strain ATCC 12472 / DSM 30191 / JCM 1249 / CCUG 213 / NBRC 12614 / NCIMB 9131 / NCTC 9757 / MK) protein is Chaperone protein HtpG.